The primary structure comprises 400 residues: NADPH dehydrogenase 1 (400 aa).

Residues T38 and Q115 each coordinate FMN. The substrate site is built by H192 and N195. Y197 serves as the catalytic Proton donor. FMN-binding residues include R244 and R349. Y376 serves as a coordination point for substrate.

In terms of assembly, homodimer or heterodimer. The cofactor is FMN.

It carries out the reaction A + NADPH + H(+) = AH2 + NADP(+). Flavin-dependent enoate reductase that catalyzes the chemo- and stereoslective hydrogenation of electron-poor alkenes. The enzyme is reduced by NADPH, and oxygen, quinones, and alpha,beta-unsaturated aldehydes and ketones can act as electron acceptors to complete catalytic turnover. The physiological oxidant remains elusive. This Saccharomyces pastorianus (Lager yeast) protein is NADPH dehydrogenase 1.